The primary structure comprises 77 residues: Acyl carrier protein (77 aa).

The 76-residue stretch at 1–76 (MSLEDDVKAI…DVIKYIQERQ (76 aa)) folds into the Carrier domain. S36 is subject to O-(pantetheine 4'-phosphoryl)serine.

Belongs to the acyl carrier protein (ACP) family. 4'-phosphopantetheine is transferred from CoA to a specific serine of apo-ACP by AcpS. This modification is essential for activity because fatty acids are bound in thioester linkage to the sulfhydryl of the prosthetic group.

The protein resides in the cytoplasm. Its pathway is lipid metabolism; fatty acid biosynthesis. Its function is as follows. Carrier of the growing fatty acid chain in fatty acid biosynthesis. The polypeptide is Acyl carrier protein (Chlamydia muridarum (strain MoPn / Nigg)).